The primary structure comprises 53 residues: ADNMSLTGLSDEEAKEFHSIFMQSFLIFTAVAVVAHFLAWAWRPWIPGAEGYG.

Residues 1–19 lie on the Cytoplasmic side of the membrane; it reads ADNMSLTGLSDEEAKEFHS. A bacteriochlorophyll-binding residues include His18 and His36. Residues 20–42 traverse the membrane as a helical segment; that stretch reads IFMQSFLIFTAVAVVAHFLAWAW. Residues 43-53 lie on the Periplasmic side of the membrane; sequence RPWIPGAEGYG.

The protein belongs to the antenna complex beta subunit family. As to quaternary structure, the core complex is formed by different alpha and beta chains, binding bacteriochlorophyll molecules, and arranged most probably in tetrameric structures disposed around the reaction center. The non-pigmented gamma chains may constitute additional components.

The protein resides in the cell inner membrane. Antenna complexes are light-harvesting systems, which transfer the excitation energy to the reaction centers. This chain is Light-harvesting protein B800/850/890 beta-1 chain, found in Halorhodospira halophila (strain DSM 244 / SL1) (Ectothiorhodospira halophila (strain DSM 244 / SL1)).